The following is a 306-amino-acid chain: UDP-N-acetylenolpyruvoylglucosamine reductase (306 aa).

An FAD-binding PCMH-type domain is found at Lys-28–Glu-194. Residue Ser-223 is the Proton donor of the active site. Glu-295 is a catalytic residue.

It belongs to the MurB family. It depends on FAD as a cofactor.

It is found in the cytoplasm. It carries out the reaction UDP-N-acetyl-alpha-D-muramate + NADP(+) = UDP-N-acetyl-3-O-(1-carboxyvinyl)-alpha-D-glucosamine + NADPH + H(+). It participates in cell wall biogenesis; peptidoglycan biosynthesis. In terms of biological role, cell wall formation. This chain is UDP-N-acetylenolpyruvoylglucosamine reductase, found in Borrelia garinii subsp. bavariensis (strain ATCC BAA-2496 / DSM 23469 / PBi) (Borreliella bavariensis).